A 355-amino-acid chain; its full sequence is 3-dehydroquinate synthase (355 aa).

Residues 98–102, 122–123, Lys135, Lys144, and 162–165 each bind NAD(+); these read GVVGD, TT, and TLDT. Zn(2+)-binding residues include Glu177, His240, and His257.

It belongs to the sugar phosphate cyclases superfamily. Dehydroquinate synthase family. The cofactor is Co(2+). Zn(2+) is required as a cofactor. It depends on NAD(+) as a cofactor.

The protein resides in the cytoplasm. It carries out the reaction 7-phospho-2-dehydro-3-deoxy-D-arabino-heptonate = 3-dehydroquinate + phosphate. It participates in metabolic intermediate biosynthesis; chorismate biosynthesis; chorismate from D-erythrose 4-phosphate and phosphoenolpyruvate: step 2/7. Catalyzes the conversion of 3-deoxy-D-arabino-heptulosonate 7-phosphate (DAHP) to dehydroquinate (DHQ). In Dictyoglomus turgidum (strain DSM 6724 / Z-1310), this protein is 3-dehydroquinate synthase.